The chain runs to 248 residues: Myelin protein P0 (248 aa).

The N-terminal stretch at 1–29 (MAPGAPSSSPSPILAALLFSSLVLSPAQA) is a signal peptide. An Ig-like V-type domain is found at 30–143 (IVVYTDKEVY…DIVGKTSQVT (114 aa)). Residues 30–153 (IVVYTDKEVY…LYVFEKVPTR (124 aa)) are Extracellular-facing. A disulfide bond links Cys50 and Cys127. The N-linked (GlcNAc...) (complex) asparagine glycan is linked to Asn122. The chain crosses the membrane as a helical span at residues 154 to 179 (YGVVLGAVIGGVLGVVLLVLLLFYVV). Topologically, residues 180-248 (RYCWLRRQAA…GLGESRKDKK (69 aa)) are cytoplasmic. At Ser210 the chain carries Phosphoserine; by PKC. A disordered region spans residues 222-248 (MLDHSRSTKAASEKKAKGLGESRKDKK). Positions 224-248 (DHSRSTKAASEKKAKGLGESRKDKK) are enriched in basic and acidic residues. Phosphoserine is present on residues Ser226 and Ser228. Phosphoserine; by PKC occurs at positions 233 and 243.

The protein belongs to the myelin P0 protein family. In terms of assembly, homodimer and homotetramer. Post-translationally, N-glycosylated; contains sulfate-substituted glycan.

It is found in the cell membrane. Its function is as follows. Is an adhesion molecule necessary for normal myelination in the peripheral nervous system. It mediates adhesion between adjacent myelin wraps and ultimately drives myelin compaction. In Equus caballus (Horse), this protein is Myelin protein P0 (MPZ).